The sequence spans 220 residues: Glutathione S-transferase U23 (220 aa).

The 80-residue stretch at 3-82 (EEIILLDYWA…YIDELWPDTN (80 aa)) folds into the GST N-terminal domain. Residues 13 to 14 (SM), 39 to 40 (NK), 53 to 54 (KI), and 66 to 67 (ES) each bind glutathione. The GST C-terminal domain maps to 88–208 (DPYQRAQARF…LPDSDKVLKS (121 aa)).

Belongs to the GST superfamily. Tau family.

It localises to the cytoplasm. The protein localises to the cytosol. It catalyses the reaction RX + glutathione = an S-substituted glutathione + a halide anion + H(+). Its function is as follows. May be involved in the conjugation of reduced glutathione to a wide number of exogenous and endogenous hydrophobic electrophiles and have a detoxification role against certain herbicides. This is Glutathione S-transferase U23 (GSTU23) from Arabidopsis thaliana (Mouse-ear cress).